A 2039-amino-acid chain; its full sequence is Calcium-channel protein CCH1 (2039 aa).

Disordered stretches follow at residues 1-171 (MQGR…PPRS) and 206-288 (PQLK…PQKE). Over residues 64–80 (STEEKKGDEYNGNDKDS) the composition is skewed to basic and acidic residues. Residue N98 is glycosylated (N-linked (GlcNAc...) asparagine). 2 stretches are compositionally biased toward low complexity: residues 122-132 (SPSTKSAKSSS) and 147-164 (FSSY…SPSS). Residues 209–226 (KSEKSRPVSDVGEDRGEG) show a composition bias toward basic and acidic residues. N-linked (GlcNAc...) asparagine glycans are attached at residues N257 and N269. The segment covering 271–281 (SRKKPSPKFFH) has biased composition (basic residues). S284 carries the post-translational modification Phosphoserine. A helical membrane pass occupies residues 346–366 (YSLLYNTLLTFYAILLAIRTY). The N-linked (GlcNAc...) asparagine glycan is linked to N379. The chain crosses the membrane as a helical span at residues 384-404 (FIFILSACFTGNDIAKIIAFG). The N-linked (GlcNAc...) asparagine glycan is linked to N559. 3 consecutive transmembrane segments (helical) span residues 563-583 (MLVY…QGSF), 658-678 (IVNS…TDLM), and 691-711 (LFFI…LIAV). N-linked (GlcNAc...) asparagine glycosylation is found at N754 and N760. Helical transmembrane passes span 766–786 (LAIY…DIGM), 809–829 (ISIV…PNMW), and 841–861 (FIIS…VLGH). N882 and N900 each carry an N-linked (GlcNAc...) asparagine glycan. The next 2 membrane-spanning stretches (helical) occupy residues 904-924 (FYFF…EGVI) and 942-962 (SFLS…LYAL). N968 carries an N-linked (GlcNAc...) asparagine glycan. The chain crosses the membrane as a helical span at residues 978–998 (FFIIWFLLSNSVILNIFIALI). N-linked (GlcNAc...) asparagine glycosylation is present at N1153. A helical transmembrane segment spans residues 1207-1227 (VFVFIFALATILLIVCSCYVT). N1240 is a glycosylation site (N-linked (GlcNAc...) asparagine). 2 helical membrane passes run 1247–1267 (CAFI…DGFI) and 1277–1297 (PWNF…IAYL). An N-linked (GlcNAc...) asparagine glycan is attached at N1302. 2 helical membrane passes run 1340 to 1360 (IFEA…WGLS) and 1408 to 1428 (FASA…VDLL). N-linked (GlcNAc...) asparagine glycosylation is present at N1433. Helical transmembrane passes span 1452–1472 (FLVL…VSFI), 1529–1549 (NFYY…MLLS), 1554–1574 (PGNL…VFLI), 1596–1616 (IRLS…HVPA), and 1618–1638 (HYWF…FIIP). Residue N1640 is glycosylated (N-linked (GlcNAc...) asparagine). The helical transmembrane segment at 1654–1674 (LPPILSLTYTWGVLFLVYAIA) threads the bilayer. N1687 and N1732 each carry an N-linked (GlcNAc...) asparagine glycan. A helical transmembrane segment spans residues 1748 to 1768 (LMSWNIISMYIFVNMFVSLII). N-linked (GlcNAc...) asparagine glycosylation is found at N1770 and N1785. Residues 1787–1822 (SEIKKYIEAWSKFDTDGTGELELSYLPRIMHSFDGP) enclose the EF-hand domain. Residues 2011–2039 (PRMNQDSTMEPPEEPIDNNDDSANDLIDR) form a disordered region. A compositionally biased stretch (acidic residues) spans 2021–2033 (PPEEPIDNNDDSA).

It belongs to the calcium channel alpha-1 subunit (TC 1.A.1.11) family. In terms of assembly, interacts with MID1 to form a Ca(2+) influx channel.

It is found in the cell membrane. Functionally, voltage-gated, high-affinity calcium channel that functions together with MID1 to mediate calcium entry into cells. Required during conditions of environmental stress. This chain is Calcium-channel protein CCH1 (CCH1), found in Saccharomyces cerevisiae (strain ATCC 204508 / S288c) (Baker's yeast).